Consider the following 329-residue polypeptide: Transmembrane protein I329L (329 aa).

The signal sequence occupies residues 1–31 (MLRVFIFFVFLGSGLAGRIKPQITCKYFISE). Asparagine 32, asparagine 39, asparagine 44, asparagine 76, asparagine 82, and asparagine 101 each carry an N-linked (GlcNAc...) asparagine; by host glycan. Topologically, residues 32 to 239 (NNTWYKYNVT…NTERYKNCYP (208 aa)) are extracellular. Residues 112–133 (ELKFLDLRYNNLQFIDYNILRK) form an LRR repeat. N-linked (GlcNAc...) asparagine; by host glycans are attached at residues asparagine 185 and asparagine 219. A disulfide bridge links cysteine 195 with cysteine 237. Residues 240–260 (FVLVSILCSCISFLFLIICLL) traverse the membrane as a helical segment. Residues 261–329 (RSICKKYSCT…EKKASCSRRK (69 aa)) lie on the Cytoplasmic side of the membrane.

Belongs to the asfivirus I329L family. Post-translationally, highly glycosylated.

The protein resides in the host endoplasmic reticulum membrane. It is found in the host Golgi apparatus membrane. Its function is as follows. Viral TLR3 homolog that probably prevents TLR3 dimerization and subsequent induction of IFN. Inhibits dsRNA-stimulated activation of NF-kB and IRF3. The sequence is that of Transmembrane protein I329L from Ornithodoros (relapsing fever ticks).